The following is a 262-amino-acid chain: Acyl-coenzyme A diphosphatase FITM2 (262 aa).

Residues 1–23 (MEHLERCAWVLRGTLVRAAVRRY) are Cytoplasmic-facing. The helical transmembrane segment at 24 to 44 (LPWALAASMLAGSLLKELSPL) threads the bilayer. Residues 45–57 (PESYLSNKRNVLN) lie on the Lumenal side of the membrane. Residues 58–78 (VYFVKVAWAWTFCLLLPFIAL) traverse the membrane as a helical segment. Residues 79–93 (TNYHLTGKAGLVLRR) lie on the Cytoplasmic side of the membrane. A helical membrane pass occupies residues 94–114 (LSTLLVGTAIWYVCTAIFSNV). Topologically, residues 115 to 145 (EHYTGSCYQSPALEGVRNEPLSKQQCHGQGG) are lumenal. Residues 146–166 (FWHGFDISGHSFLLTFCALMI) form a helical membrane-spanning segment. Histidine 155 is a catalytic residue. Residues 167–185 (VEEMAVLHEVKTDRSHCLH) lie on the Cytoplasmic side of the membrane. A helical transmembrane segment spans residues 186-206 (VAITALVVALGFLTFIWVWMF). Topologically, residues 207-218 (LCTAVYFHNLSQ) are lumenal. Histidine 214 is an active-site residue. Residues 219-239 (KVFGTLFGLLGWYGTYGFWYL) form a helical membrane-spanning segment. Residues 240–262 (KSFSPGLPPQSCSSNLKQDSYKR) are Cytoplasmic-facing.

It belongs to the FIT family. FIT2 subfamily.

It localises to the endoplasmic reticulum membrane. It carries out the reaction an acyl-CoA + H2O = an acyl-4'-phosphopantetheine + adenosine 3',5'-bisphosphate + 2 H(+). The catalysed reaction is (9Z)-octadecenoyl-CoA + H2O = S-(9Z-octadecenoyl)-4'-phosphopantetheine + adenosine 3',5'-bisphosphate + 2 H(+). The enzyme catalyses (5Z,8Z,11Z,14Z)-eicosatetraenoyl-CoA + H2O = S-(5Z,8Z,11Z,14Z-eicosatetraenoyl)-4'-phosphopantetheine + adenosine 3',5'-bisphosphate + 2 H(+). It catalyses the reaction hexadecanoyl-CoA + H2O = S-hexadecanoyl-4'-phosphopantetheine + adenosine 3',5'-bisphosphate + 2 H(+). Functionally, fatty acyl-coenzyme A (CoA) diphosphatase that hydrolyzes fatty acyl-CoA to yield acyl-4'-phosphopantetheine and adenosine 3',5'-bisphosphate. Preferentially hydrolyzes unsaturated long-chain acyl-CoA substrates such as oleoyl-CoA/(9Z)-octadecenoyl-CoA and arachidonoyl-CoA/(5Z,8Z,11Z,14Z)-eicosatetraenoyl-CoA in the endoplasmic reticulum (ER) lumen. This catalytic activity is required for maintaining ER structure and for lipid droplets (LDs) biogenesis, which are lipid storage organelles involved in maintaining lipid and energy homeostasis. Directly binds to diacylglycerol (DAGs) and triacylglycerol, which is also important for LD biogenesis. May support directional budding of nacent LDs from the ER into the cytosol by reducing DAG levels at sites of LD formation. Plays a role in the regulation of cell morphology and cytoskeletal organization. The sequence is that of Acyl-coenzyme A diphosphatase FITM2 from Sus scrofa (Pig).